Reading from the N-terminus, the 55-residue chain is ATP synthase F(0) complex subunit 8 (55 aa).

The chain crosses the membrane as a helical span at residues 10 to 32; the sequence is FFIMLASWLTFSLIIQPKLLTFV.

It belongs to the ATPase protein 8 family. In terms of assembly, component of the ATP synthase complex composed at least of ATP5F1A/subunit alpha, ATP5F1B/subunit beta, ATP5MC1/subunit c (homooctomer), MT-ATP6/subunit a, MT-ATP8/subunit 8, ATP5ME/subunit e, ATP5MF/subunit f, ATP5MG/subunit g, ATP5MK/subunit k, ATP5MJ/subunit j, ATP5F1C/subunit gamma, ATP5F1D/subunit delta, ATP5F1E/subunit epsilon, ATP5PF/subunit F6, ATP5PB/subunit b, ATP5PD/subunit d, ATP5PO/subunit OSCP. ATP synthase complex consists of a soluble F(1) head domain (subunits alpha(3) and beta(3)) - the catalytic core - and a membrane F(0) domain - the membrane proton channel (subunits c, a, 8, e, f, g, k and j). These two domains are linked by a central stalk (subunits gamma, delta, and epsilon) rotating inside the F1 region and a stationary peripheral stalk (subunits F6, b, d, and OSCP).

The protein resides in the mitochondrion membrane. In terms of biological role, subunit 8, of the mitochondrial membrane ATP synthase complex (F(1)F(0) ATP synthase or Complex V) that produces ATP from ADP in the presence of a proton gradient across the membrane which is generated by electron transport complexes of the respiratory chain. ATP synthase complex consist of a soluble F(1) head domain - the catalytic core - and a membrane F(1) domain - the membrane proton channel. These two domains are linked by a central stalk rotating inside the F(1) region and a stationary peripheral stalk. During catalysis, ATP synthesis in the catalytic domain of F(1) is coupled via a rotary mechanism of the central stalk subunits to proton translocation. In vivo, can only synthesize ATP although its ATP hydrolase activity can be activated artificially in vitro. Part of the complex F(0) domain. This is ATP synthase F(0) complex subunit 8 from Loxigilla noctis (Lesser Antillean bullfinch).